A 1055-amino-acid chain; its full sequence is DNA-directed RNA polymerase subunit beta' (1055 aa).

Residues Cys-60, Cys-62, Cys-75, and Cys-78 each coordinate Zn(2+). Asp-449, Asp-451, and Asp-453 together coordinate Mg(2+). Cys-818, Cys-892, Cys-899, and Cys-902 together coordinate Zn(2+).

The protein belongs to the RNA polymerase beta' chain family. In terms of assembly, the RNAP catalytic core consists of 2 alpha, 1 beta, 1 beta' and 1 omega subunit. When a sigma factor is associated with the core the holoenzyme is formed, which can initiate transcription. It depends on Mg(2+) as a cofactor. Requires Zn(2+) as cofactor.

The enzyme catalyses RNA(n) + a ribonucleoside 5'-triphosphate = RNA(n+1) + diphosphate. In terms of biological role, DNA-dependent RNA polymerase catalyzes the transcription of DNA into RNA using the four ribonucleoside triphosphates as substrates. This Pediococcus acidilactici protein is DNA-directed RNA polymerase subunit beta'.